A 144-amino-acid polypeptide reads, in one-letter code: Ribonuclease H (144 aa).

The 141-residue stretch at 1–141 (MDKIDIYSDG…ADALANRGVE (141 aa)) folds into the RNase H type-1 domain. Positions 9, 47, 69, and 133 each coordinate Mg(2+).

It belongs to the RNase H family. In terms of assembly, monomer. Mg(2+) serves as cofactor.

It localises to the cytoplasm. The enzyme catalyses Endonucleolytic cleavage to 5'-phosphomonoester.. Endonuclease that specifically degrades the RNA of RNA-DNA hybrids. The protein is Ribonuclease H of Janthinobacterium sp. (strain Marseille) (Minibacterium massiliensis).